Consider the following 254-residue polypeptide: Probable phosphoglycerate mutase 4 (254 aa).

Residues 10 to 17 (RHGESTWN) and 23 to 24 (SC) each bind substrate. The Tele-phosphohistidine intermediate role is filled by H11. Phosphoserine is present on residues S14 and S23. Y26 carries the phosphotyrosine modification. Residue S31 is modified to Phosphoserine. Substrate contacts are provided by residues R62, 89–92 (ERHY), and K100. The active-site Proton donor/acceptor is E89. An N6-acetyllysine modification is found at K106. 116 to 117 (RR) serves as a coordination point for substrate. A Phosphoserine modification is found at S118. 187-188 (GN) is a binding site for substrate. Position 251 is an N6-acetyllysine; alternate (K251). Residue K251 is modified to N6-succinyllysine; alternate. 2 positions are modified to N6-acetyllysine: K253 and K254.

It belongs to the phosphoglycerate mutase family. BPG-dependent PGAM subfamily.

It catalyses the reaction (2R)-2-phosphoglycerate = (2R)-3-phosphoglycerate. The catalysed reaction is (2R)-3-phospho-glyceroyl phosphate = (2R)-2,3-bisphosphoglycerate + H(+). This Pan troglodytes (Chimpanzee) protein is Probable phosphoglycerate mutase 4 (PGAM4).